We begin with the raw amino-acid sequence, 371 residues long: Histidinol-phosphate aminotransferase (371 aa).

Lys228 is subject to N6-(pyridoxal phosphate)lysine.

This sequence belongs to the class-II pyridoxal-phosphate-dependent aminotransferase family. Histidinol-phosphate aminotransferase subfamily. It depends on pyridoxal 5'-phosphate as a cofactor.

The catalysed reaction is L-histidinol phosphate + 2-oxoglutarate = 3-(imidazol-4-yl)-2-oxopropyl phosphate + L-glutamate. It functions in the pathway amino-acid biosynthesis; L-histidine biosynthesis; L-histidine from 5-phospho-alpha-D-ribose 1-diphosphate: step 7/9. The sequence is that of Histidinol-phosphate aminotransferase from Methanococcus maripaludis (strain C5 / ATCC BAA-1333).